The sequence spans 367 residues: Alginate lyase (367 aa).

Residues 1 to 27 form the signal peptide; it reads MKTSHLIRIALPGALAAALLASQVSQA. Substrate is bound by residues 65–66, 138–139, and Tyr256; these read SK and HT.

It belongs to the polysaccharide lyase 5 family.

The protein localises to the periplasm. The catalysed reaction is Eliminative cleavage of alginate to give oligosaccharides with 4-deoxy-alpha-L-erythro-hex-4-enuronosyl groups at their non-reducing ends and beta-D-mannuronate at their reducing end.. In terms of biological role, catalyzes the depolymerization of alginate by cleaving the beta-1,4 glycosidic bond between two adjacent sugar residues via a beta-elimination mechanism. May serve to degrade mislocalized alginate that is trapped in the periplasmic space. Acts preferentially on non-acetylated alginate or its precursor mannuronan. Is able to catalyze cleavage adjacent to either mannuronate or guluronate residues in alginate. Exhaustive digestion of alginate by AlgL generates dimeric and trimeric products. In addition to its enzymatic function, AlgL appears to be required for alginate export, maybe as part of a multi-protein alginate-secretion complex. The chain is Alginate lyase from Pseudomonas aeruginosa (strain ATCC 15692 / DSM 22644 / CIP 104116 / JCM 14847 / LMG 12228 / 1C / PRS 101 / PAO1).